A 1076-amino-acid chain; its full sequence is MINRLKTYSNLLNIQSKSFKNFLKIGIINELKKIQKIIHSNFEINFHINALKYKKPKLSSESCLIKNETYNIDIKIPMEIKYEGKIIFKKKYISFCKIPFMTEKGTFICNGNTRIIINQLIRSPGIYIKKKKNCLLATLIPKTGSWITIKRNKKKENFIKIDKINNSIPLFTFLNILGLSKKKITLSLNKNNYSKNFKISKKKKIEIPTINLTQLSKENNIKTIRNNLYNRFLNSDNYNLGDTGRFKINKKIYKTEFFTNKKILMPEDFLGIFNYMIKIKNINIKSNKIDDLKNKIVLSVGELMQNKFNNIIKDIYTKIIEKINKFEQKKKQEEKYNKEKKEEKIKINKTYFINSKNLTDNIKKFITTNPLSQLLNDLNPLSELTHKRKISTLGIGGIEKNKASTKIREIHNSHYGRICPIETSEGKNAGLVLSLAKDIRINKHGFIESPFYKVIKGNIKKNKGIFFISSENEKNIKIAPCDILKNFKLNKNYGVKNKNEFYYDSYKSINFISTSTDQFNSIGTGIIPFLEHNDANRVLMGATMQKQALILKNKEPSLIETGREILINRDSKSTIIAKESGTVIYSSSKKIIIQKKSKKSKFKNINLFKKYFKKKLKKNKKIKKHKHTIYLLNIDEKNNSNIYQTRTSIVKKNDWIKKGQIIAEGIGSLNGNLCLGKNILVGYLSWEGYNFEDAIIISERLRNEDILTSIHVKKCKSFLINHKEKKEEITKNIPDIKLKNVKNLNNNGIIKIGSKINGKEILIGIIKKRLINYEVELIYEILSEYERKNISVLSPKNLVGIVTNTKIHKIKNCYQIEIYITEKKKIQIGDKLSGRHGNKGVISKIIPIVDMPYLPDGTPIDIILNPLGIPSRMNVGQIYECLLNLSAINLKERYKIQPFDEYQYKNNSEILIYKKLNQSRKKTKKEWLFNPNNPGKTILFNGKNGKPFKQTISFGYSYILKLMHIAEEKIHAKTISNYSSIIKQPVKGKSKNGGQRFGEMEVWAIEGFGAAFLLQELLTIKSDDLHNKSQILKNLMNGLSMSKPNVPESFKLLILELQSLGLNINIFTKKKTLFTK.

Belongs to the RNA polymerase beta chain family. In terms of assembly, in plastids the minimal PEP RNA polymerase catalytic core is composed of four subunits: alpha, beta, beta', and beta''. When a (nuclear-encoded) sigma factor is associated with the core the holoenzyme is formed, which can initiate transcription.

It is found in the plastid. The catalysed reaction is RNA(n) + a ribonucleoside 5'-triphosphate = RNA(n+1) + diphosphate. Its function is as follows. DNA-dependent RNA polymerase catalyzes the transcription of DNA into RNA using the four ribonucleoside triphosphates as substrates. In Euglena longa (Euglenophycean alga), this protein is DNA-directed RNA polymerase subunit beta.